The following is a 321-amino-acid chain: Probable pectate lyase A (321 aa).

The N-terminal stretch at 1–18 is a signal peptide; sequence MKFVATLIACGLSGLALA. An N-linked (GlcNAc...) asparagine glycan is attached at Asn93. Positions 134, 163, and 167 each coordinate Ca(2+). Arg220 is an active-site residue. N-linked (GlcNAc...) asparagine glycosylation is present at Asn238.

The protein belongs to the polysaccharide lyase 1 family. Requires Ca(2+) as cofactor.

The protein resides in the secreted. It carries out the reaction Eliminative cleavage of (1-&gt;4)-alpha-D-galacturonan to give oligosaccharides with 4-deoxy-alpha-D-galact-4-enuronosyl groups at their non-reducing ends.. Its function is as follows. Pectinolytic enzyme consist of four classes of enzymes: pectin lyase, polygalacturonase, pectin methylesterase and rhamnogalacturonase. Among pectinolytic enzymes, pectin lyase is the most important in depolymerization of pectin, since it cleaves internal glycosidic bonds of highly methylated pectins. Favors pectate, the anion, over pectin, the methyl ester. The sequence is that of Probable pectate lyase A (plyA) from Aspergillus fumigatus (strain ATCC MYA-4609 / CBS 101355 / FGSC A1100 / Af293) (Neosartorya fumigata).